The chain runs to 145 residues: MTVFCELDSGGELPEYTTPGAAGADLRANIEEPIALLPGQRALIPTGIKAEIPEGYELQVRPRSGLALKHGITVLNSPGTIDSDYRGEIRVILINFGDSTFIIEPKMRIAQVVLSPVVQATFVVKQESLAETARGSGGFGHTGAS.

Substrate contacts are provided by residues 63 to 65 (RSG), Asn-76, and 80 to 82 (TID).

Belongs to the dUTPase family. The cofactor is Mg(2+).

The catalysed reaction is dUTP + H2O = dUMP + diphosphate + H(+). It participates in pyrimidine metabolism; dUMP biosynthesis; dUMP from dCTP (dUTP route): step 2/2. Functionally, this enzyme is involved in nucleotide metabolism: it produces dUMP, the immediate precursor of thymidine nucleotides and it decreases the intracellular concentration of dUTP so that uracil cannot be incorporated into DNA. The polypeptide is Deoxyuridine 5'-triphosphate nucleotidohydrolase (Chlamydia pneumoniae (Chlamydophila pneumoniae)).